We begin with the raw amino-acid sequence, 148 residues long: SsrA-binding protein (148 aa).

It belongs to the SmpB family.

The protein localises to the cytoplasm. Its function is as follows. Required for rescue of stalled ribosomes mediated by trans-translation. Binds to transfer-messenger RNA (tmRNA), required for stable association of tmRNA with ribosomes. tmRNA and SmpB together mimic tRNA shape, replacing the anticodon stem-loop with SmpB. tmRNA is encoded by the ssrA gene; the 2 termini fold to resemble tRNA(Ala) and it encodes a 'tag peptide', a short internal open reading frame. During trans-translation Ala-aminoacylated tmRNA acts like a tRNA, entering the A-site of stalled ribosomes, displacing the stalled mRNA. The ribosome then switches to translate the ORF on the tmRNA; the nascent peptide is terminated with the 'tag peptide' encoded by the tmRNA and targeted for degradation. The ribosome is freed to recommence translation, which seems to be the essential function of trans-translation. The chain is SsrA-binding protein from Azoarcus sp. (strain BH72).